We begin with the raw amino-acid sequence, 217 residues long: Adenylate kinase (217 aa).

An ATP-binding site is contributed by 10–15 (GAGKGT). Residues 30–59 (STGDMLRAQIKAGTELGMKAKAIMDAGGLV) form an NMP region. AMP-binding positions include Thr-31, Arg-36, 57-59 (GLV), 85-88 (GFPR), and Gln-92. Residues 122–159 (GRRVHVASGRTYHVVFNPPKVAGKDDVTGEDLIQRDDD) are LID. ATP is bound by residues Arg-123 and 132 to 133 (TY). Positions 156 and 167 each coordinate AMP. Gly-203 contacts ATP.

Belongs to the adenylate kinase family. As to quaternary structure, monomer.

The protein resides in the cytoplasm. It catalyses the reaction AMP + ATP = 2 ADP. Its pathway is purine metabolism; AMP biosynthesis via salvage pathway; AMP from ADP: step 1/1. Its function is as follows. Catalyzes the reversible transfer of the terminal phosphate group between ATP and AMP. Plays an important role in cellular energy homeostasis and in adenine nucleotide metabolism. This chain is Adenylate kinase, found in Thiobacillus denitrificans (strain ATCC 25259 / T1).